Consider the following 628-residue polypeptide: Basal cell adhesion molecule (628 aa).

Residues 1 to 31 form the signal peptide; it reads MEPPDARAGARRAPRLLVLALLLAAPPGSKA. Ig-like V-type domains follow at residues 32 to 142 and 150 to 253; these read EVRL…ARLK and PEVS…RLDG. Residues 32-547 lie on the Extracellular side of the membrane; the sequence is EVRLSVPPLV…GTVAPQTSQA (516 aa). 3 disulfides stabilise this stretch: cysteine 53-cysteine 125, cysteine 172-cysteine 237, and cysteine 291-cysteine 337. Ig-like C2-type domains lie at 254 to 355, 355 to 441, and 448 to 538; these read PSFS…KTLE, ELRV…RSFR, and PELK…FHFG. Residues asparagine 321, asparagine 330, and asparagine 378 are each glycosylated (N-linked (GlcNAc...) asparagine). 2 disulfides stabilise this stretch: cysteine 384-cysteine 424 and cysteine 473-cysteine 522. The chain crosses the membrane as a helical span at residues 548–568; the sequence is GVAVMAVAISVALLLLVVAVF. Over 569–628 the chain is Cytoplasmic; sequence YCMRRKGRPGCCQWGEKGSPPPGEPKLSHSGSQRPEQTGLLMGSASGGAKHGSGGFGDEC. The tract at residues 580–628 is disordered; sequence CQWGEKGSPPPGEPKLSHSGSQRPEQTGLLMGSASGGAKHGSGGFGDEC. 4 positions are modified to phosphoserine: serine 596, serine 598, serine 600, and serine 621. Positions 613 to 628 are enriched in gly residues; it reads ASGGAKHGSGGFGDEC.

Homodimer. Interacts with ITGA4:ITGB1. Interacts with spectrins SPTA1 and SPTB1. In terms of processing, epinephrine-stimulated phosphorylation of Ser-621 by PKA enhances adhesion to laminin. Ser-621 can also be phosphorylated by AKT1.

Its subcellular location is the cell membrane. Transmembrane glycoprotein that functions as both a receptor and an adhesion molecule playing a crucial role in cell adhesion, motility, migration and invasion. Extracellular domain enables binding to extracellular matrix proteins, such as laminin, integrin and other ligands while its intracellular domain interacts with cytoskeletal proteins like hemoglobin, facilitating cell signal transduction. Serves as a receptor for laminin alpha-5/LAMA5 to promote cell adhesion. Mechanistically, JAK2 induces BCAM phosphorylation and activates its adhesion to laminin by stimulating a Rap1/AKT signaling pathway in the absence of EPOR. The polypeptide is Basal cell adhesion molecule (BCAM) (Bos taurus (Bovine)).